Reading from the N-terminus, the 467-residue chain is 3-isopropylmalate dehydratase large subunit (467 aa).

Residues Cys348, Cys409, and Cys412 each coordinate [4Fe-4S] cluster.

This sequence belongs to the aconitase/IPM isomerase family. LeuC type 1 subfamily. As to quaternary structure, heterodimer of LeuC and LeuD. [4Fe-4S] cluster is required as a cofactor.

It carries out the reaction (2R,3S)-3-isopropylmalate = (2S)-2-isopropylmalate. The protein operates within amino-acid biosynthesis; L-leucine biosynthesis; L-leucine from 3-methyl-2-oxobutanoate: step 2/4. In terms of biological role, catalyzes the isomerization between 2-isopropylmalate and 3-isopropylmalate, via the formation of 2-isopropylmaleate. The protein is 3-isopropylmalate dehydratase large subunit of Magnetococcus marinus (strain ATCC BAA-1437 / JCM 17883 / MC-1).